The sequence spans 253 residues: Sec-independent protein translocase protein TatC (253 aa).

Helical transmembrane passes span 18-38 (VSVG…KSIF), 69-89 (AIVI…APGL), 96-116 (VILP…AFSY), 151-171 (LILG…LAKV), 187-207 (IVVI…SQIF), and 208-228 (MALP…MVNP). The interval 231–253 (KDNENNNENNNENNTKENTKSES) is disordered. Basic and acidic residues predominate over residues 244 to 253 (NTKENTKSES).

It belongs to the TatC family. As to quaternary structure, the Tat system comprises two distinct complexes: a TatABC complex, containing multiple copies of TatA, TatB and TatC subunits, and a separate TatA complex, containing only TatA subunits. Substrates initially bind to the TatABC complex, which probably triggers association of the separate TatA complex to form the active translocon.

The protein resides in the cell inner membrane. Part of the twin-arginine translocation (Tat) system that transports large folded proteins containing a characteristic twin-arginine motif in their signal peptide across membranes. Together with TatB, TatC is part of a receptor directly interacting with Tat signal peptides. The sequence is that of Sec-independent protein translocase protein TatC from Helicobacter pylori (strain ATCC 700392 / 26695) (Campylobacter pylori).